A 92-amino-acid polypeptide reads, in one-letter code: Envelope glycoprotein J (92 aa).

Residues 1–21 form the signal peptide; it reads MSLRAVWHLGLLGSLVGAVLA. The Extracellular portion of the chain corresponds to 22-49; the sequence is ATHRGPAANTTDPLTHAPVSPHPSPLGG. N-linked (GlcNAc...) asparagine; by host glycosylation is present at N30. The helical transmembrane segment at 50–70 threads the bilayer; that stretch reads FAVPLVVGGLCAVVLGAACLL. The Cytoplasmic segment spans residues 71-92; the sequence is ELLRRTCRGWGRYHPYMDPVVV.

The protein belongs to the alphaherpesvirinae glycoprotein J family.

It is found in the host Golgi apparatus membrane. It localises to the host endoplasmic reticulum membrane. The protein resides in the host endosome membrane. Its function is as follows. Inhibits host cell apoptosis. Induces an increase in reactive oxygen species (ROS) in the host cell. In Homo sapiens (Human), this protein is Envelope glycoprotein J (gJ).